The chain runs to 124 residues: Aspartate 1-decarboxylase (124 aa).

S25 functions as the Schiff-base intermediate with substrate; via pyruvic acid in the catalytic mechanism. S25 bears the Pyruvic acid (Ser) mark. Substrate is bound at residue T57. Y58 functions as the Proton donor in the catalytic mechanism. Residue 73–75 participates in substrate binding; the sequence is GAA.

The protein belongs to the PanD family. As to quaternary structure, heterooctamer of four alpha and four beta subunits. Requires pyruvate as cofactor. In terms of processing, is synthesized initially as an inactive proenzyme, which is activated by self-cleavage at a specific serine bond to produce a beta-subunit with a hydroxyl group at its C-terminus and an alpha-subunit with a pyruvoyl group at its N-terminus.

It localises to the cytoplasm. It catalyses the reaction L-aspartate + H(+) = beta-alanine + CO2. It functions in the pathway cofactor biosynthesis; (R)-pantothenate biosynthesis; beta-alanine from L-aspartate: step 1/1. Functionally, catalyzes the pyruvoyl-dependent decarboxylation of aspartate to produce beta-alanine. In Clostridium beijerinckii (strain ATCC 51743 / NCIMB 8052) (Clostridium acetobutylicum), this protein is Aspartate 1-decarboxylase.